The sequence spans 355 residues: Isopentenyl-diphosphate delta-isomerase (355 aa).

9–10 (RK) is a substrate binding site. FMN contacts are provided by residues 67–69 (AIT), Ser-97, and Asn-125. Residue 97–99 (SQR) participates in substrate binding. A substrate-binding site is contributed by Gln-161. Mg(2+) is bound at residue Glu-162. FMN is bound by residues Lys-197, Thr-227, 276–278 (GIR), and 297–298 (AL).

It belongs to the IPP isomerase type 2 family. As to quaternary structure, homooctamer. Dimer of tetramers. It depends on FMN as a cofactor. Requires NADPH as cofactor. Mg(2+) serves as cofactor.

Its subcellular location is the cytoplasm. The enzyme catalyses isopentenyl diphosphate = dimethylallyl diphosphate. In terms of biological role, involved in the biosynthesis of isoprenoids. Catalyzes the 1,3-allylic rearrangement of the homoallylic substrate isopentenyl (IPP) to its allylic isomer, dimethylallyl diphosphate (DMAPP). In Methanococcus maripaludis (strain DSM 14266 / JCM 13030 / NBRC 101832 / S2 / LL), this protein is Isopentenyl-diphosphate delta-isomerase.